Reading from the N-terminus, the 562-residue chain is Gut esterase 1 (562 aa).

The signal sequence occupies residues 1–16; the sequence is MRVLLASLLIFGACWA. Cysteines 75 and 93 form a disulfide. Ser-199 functions as the Acyl-ester intermediate in the catalytic mechanism. A disulfide bridge connects residues Cys-251 and Cys-259. Active-site charge relay system residues include Glu-320 and His-451. The Prevents secretion from ER motif lies at 559–562; sequence KDEL.

It belongs to the type-B carboxylesterase/lipase family. In terms of tissue distribution, expressed only in the intestine.

It is found in the endoplasmic reticulum lumen. The catalysed reaction is a carboxylic ester + H2O = an alcohol + a carboxylate + H(+). This chain is Gut esterase 1 (ges-1), found in Caenorhabditis briggsae.